A 472-amino-acid chain; its full sequence is Adenylyl cyclase-associated protein 1 (472 aa).

An N-acetylalanine modification is found at Ala2. Tyr31 is subject to Phosphotyrosine. A Phosphoserine modification is found at Ser34. Lys81 is subject to N6-acetyllysine. The disordered stretch occupies residues Glu216–Ser253. Positions Ser218 to Ser228 are enriched in low complexity. Over residues Gly229–Pro243 the composition is skewed to pro residues. A compositionally biased stretch (low complexity) spans Thr244–Ser253. An N6-methyllysine modification is found at Lys287. Phosphoserine is present on residues Ser290, Ser295, and Ser301. The interval Ser290–Ala312 is disordered. A C-CAP/cofactor C-like domain is found at Pro307 to Val450. A Glycyl lysine isopeptide (Lys-Gly) (interchain with G-Cter in SUMO1) cross-link involves residue Lys345.

It belongs to the CAP family. In terms of assembly, homodimer. Binds actin monomers.

It is found in the cell membrane. Its function is as follows. Directly regulates filament dynamics and has been implicated in a number of complex developmental and morphological processes, including mRNA localization and the establishment of cell polarity. The polypeptide is Adenylyl cyclase-associated protein 1 (CAP1) (Bos taurus (Bovine)).